Reading from the N-terminus, the 334-residue chain is L-lactate dehydrogenase B chain (334 aa).

At Ala2 the chain carries N-acetylalanine. N6-acetyllysine is present on Lys7. NAD(+) is bound by residues 30-58 and Arg100; that span reads GQVG…LEDK. The residue at position 44 (Ser44) is a Phosphoserine. Residue Lys58 is modified to N6-acetyllysine. Arg107 provides a ligand contact to substrate. The residue at position 119 (Lys119) is an N6-acetyllysine. Asn139 contacts NAD(+). Substrate is bound by residues Asn139 and Arg170. Catalysis depends on His194, which acts as the Proton acceptor. Tyr240 carries the phosphotyrosine modification. Position 249 (Thr249) interacts with substrate. At Lys329 the chain carries N6-acetyllysine.

It belongs to the LDH/MDH superfamily. LDH family. Homotetramer. Interacts with PTEN upstream reading frame protein MP31; the interaction leads to inhibition of mitochondrial lactate dehydrogenase activity, preventing conversion of lactate to pyruvate in mitochondria.

The protein resides in the cytoplasm. The protein localises to the mitochondrion inner membrane. The catalysed reaction is (S)-lactate + NAD(+) = pyruvate + NADH + H(+). It participates in fermentation; pyruvate fermentation to lactate; (S)-lactate from pyruvate: step 1/1. Interconverts simultaneously and stereospecifically pyruvate and lactate with concomitant interconversion of NADH and NAD(+). This Rattus norvegicus (Rat) protein is L-lactate dehydrogenase B chain (Ldhb).